We begin with the raw amino-acid sequence, 188 residues long: Putative protein SSX6 (188 aa).

2 disordered regions span residues 1–22 (MNGD…EKRS) and 74–188 (KRAT…EDDK). Residues 20-83 (KRSKAFDDIA…KRATDSQRND (64 aa)) enclose the KRAB-related domain. Basic and acidic residues-rich tracts occupy residues 75-96 (RATD…EVER) and 112-122 (MPEKPAEEGSD). Residue S123 is modified to Phosphoserine. Residues 147-156 (SSEKIHERSG) show a composition bias toward basic and acidic residues. Basic residues predominate over residues 157–170 (PKRGKHAWTHRLRE). Positions 179–188 (EISDPEEDDK) are enriched in acidic residues.

Belongs to the SSX family. As to expression, not detected in any normal tissues. Expressed in a melanoma cell line.

Functionally, could act as a modulator of transcription. The chain is Putative protein SSX6 from Homo sapiens (Human).